Consider the following 471-residue polypeptide: A-type ATP synthase subunit B (471 aa).

It belongs to the ATPase alpha/beta chains family. In terms of assembly, has multiple subunits with at least A(3), B(3), C, D, E, F, H, I and proteolipid K(x).

Its subcellular location is the cell membrane. Component of the A-type ATP synthase that produces ATP from ADP in the presence of a proton gradient across the membrane. The B chain is a regulatory subunit. The chain is A-type ATP synthase subunit B from Natronomonas pharaonis (strain ATCC 35678 / DSM 2160 / CIP 103997 / JCM 8858 / NBRC 14720 / NCIMB 2260 / Gabara) (Halobacterium pharaonis).